We begin with the raw amino-acid sequence, 159 residues long: MAAAAAAAGGAALAVSTGLETATLQKLALRRKKVLGAEEMELYELAQAAGAAIDPDVFKILVDLLNLNVAPLAVFQMLKSMCAGQRLASDPQDSVPISLSTSTSETRGRNRGGPILGNVTISAERGSRERPIQRMPRQPSATRLPKVGGSGKSNSRSSP.

A disordered region spans residues 87 to 159 (LASDPQDSVP…SGKSNSRSSP (73 aa)). The segment covering 91–105 (PQDSVPISLSTSTSE) has biased composition (polar residues). The residue at position 111 (R111) is an Omega-N-methylarginine. Residue S153 is modified to Phosphoserine.

Belongs to the MOZART2 family. As to quaternary structure, associates with the gamma-tubulin ring complex (gTuRC) consisting of TUBGCP2, TUBGCP3, TUBGCP4, TUBGCP5 and TUBGCP6 and gamma-tubulin TUBG1 or TUBG2; within the complex, interacts with TUBGCP2; the interaction plays a role in gTuRC activation.

The protein resides in the cytoplasm. The protein localises to the cytoskeleton. It is found in the microtubule organizing center. Its subcellular location is the centrosome. It localises to the spindle. In terms of biological role, required for the recruitment and the assembly of the gamma-tubulin ring complex (gTuRC) at the centrosome. The gTuRC regulates the minus-end nucleation of alpha-beta tubulin heterodimers that grow into microtubule protafilaments, a critical step in centrosome duplication and spindle formation. This Mus musculus (Mouse) protein is Mitotic-spindle organizing protein 2 (Mzt2).